The sequence spans 120 residues: U13-lycotoxin-Ls1a (120 aa).

Residues 1–16 (MKILFVLISILHAVYC) form the signal peptide. A propeptide spanning residues 17 to 54 (FSSEEDVDSAYLANELEPVEDINSEQYAALEPKEEHER) is cleaved from the precursor. 4 cysteine pairs are disulfide-bonded: cysteine 56–cysteine 70, cysteine 63–cysteine 76, cysteine 69–cysteine 87, and cysteine 78–cysteine 85. The Agouti domain maps to 56–95 (CADMGQDCKDDCDCCLNIATCNCWFGRYFCSCTFGDYQTC).

The protein belongs to the neurotoxin 05 (agouti) family. In terms of processing, contains 6 disulfide bonds. In terms of tissue distribution, expressed by the venom gland.

The protein resides in the secreted. This is U13-lycotoxin-Ls1a from Lycosa singoriensis (Wolf spider).